Reading from the N-terminus, the 564-residue chain is 5-hydroxytryptamine receptor 1 (564 aa).

Residues 1 to 26 (MALSGQDWRRHQSHRQHRNHRTQGNH) form a disordered region. Over residues 11–23 (HQSHRQHRNHRTQ) the composition is skewed to basic residues. A helical membrane pass occupies residues 29 to 51 (LISTATLTLFVLFLSSWIAYAAG). Repeat copies occupy residues 89–90 (GS), 91–92 (GS), 93–94 (GS), 95–96 (GS), 97–98 (GS), 99–100 (GS), 101–102 (GS), 103–104 (GS), and 105–106 (GS). The 9 X 2 AA tandem repeats of G-S stretch occupies residues 89-106 (GSGSGSGSGSGSGSGSGS). A helical membrane pass occupies residues 165-188 (VSIVLLIVILGTVVGNVLVCIAVC). At 189–198 (MVRKLRRPCN) the chain is on the cytoplasmic side. Residues 199–222 (YLLVSLALSDLCVALLVMPMALLY) form a helical membrane-spanning segment. At 223-236 (EVLEKWNFGPLLCD) the chain is on the extracellular side. Cysteines 235 and 314 form a disulfide. Residues 237-258 (IWVSFDVLCCTASILNLCAISV) form a helical membrane-spanning segment. Residues 238–247 (WVSFDVLCCT) form an agonist binding region. The ergotamine site is built by Asp242 and Thr247. The DRY motif; important for ligand-induced conformation changes signature appears at 259 to 261 (DRY). The Cytoplasmic portion of the chain corresponds to 259 to 278 (DRYLAITKPLEYGVKRTPRR). The helical transmembrane segment at 279–302 (MMLCVGIVWLAAACISLPPLLILG) threads the bilayer. Over 303–330 (NEHEDEEGQPICTVCQNFAYQIYATLGS) the chain is Extracellular. The chain crosses the membrane as a helical span at residues 331-353 (FYIPLSVMLFVYYQIFRAARRIV). Over 354-454 (LEEKRAQTHL…QLAKEKKAST (101 aa)) the chain is Cytoplasmic. The tract at residues 367-396 (LNGTGSPSAPQAPPLGHTELASSGNGQRHS) is disordered. The segment covering 386 to 396 (LASSGNGQRHS) has biased composition (polar residues). Residues 455–476 (TLGIIMSAFTVCWLPFFILALI) traverse the membrane as a helical segment. At 477–487 (RPFETMHVPAS) the chain is on the extracellular side. Residues 488-510 (LSSLFLWLGYANSLLNPIIYATL) traverse the membrane as a helical segment. The NPxxY motif; important for ligand-induced conformation changes and signaling signature appears at 503-507 (NPIIY). At 511 to 564 (NRDFRKPFQEILYFRCSSLNTMMRENYYQDQYGEPPSQRVMLGDERHGARESFL) the chain is on the cytoplasmic side.

This sequence belongs to the G-protein coupled receptor 1 family. 5-hydroxytryptamine receptor subfamily. Expressed predominantly in adult heads.

The protein resides in the cell membrane. G-protein coupled receptor for 5-hydroxytryptamine (serotonin). Also functions as a receptor for various alkaloids. Ligand binding causes a conformation change that triggers signaling via guanine nucleotide-binding proteins (G proteins) and modulates the activity of down-stream effectors, such as adenylate cyclase. Signaling activates adenylate cyclase activity. The protein is 5-hydroxytryptamine receptor 1 (5-HT7) of Drosophila melanogaster (Fruit fly).